Here is a 519-residue protein sequence, read N- to C-terminus: Cyclic AMP-responsive element-binding protein 3-like protein 2 (519 aa).

At 1 to 374 the chain is on the cytoplasmic side; that stretch reads MEIMDSGEPF…SCRVTGTQTS (374 aa). Disordered stretches follow at residues 58 to 77, 85 to 121, and 193 to 261; these read GRGDAMDTEEELTRASPVPP, YSLCGDSRPQSPLSHLPGEPGSDAADSESDEWPMEQE, and GLEC…SGPL. Residues 109–119 show a composition bias toward acidic residues; it reads ADSESDEWPME. 2 stretches are compositionally biased toward low complexity: residues 205–217 and 240–249; these read SSVGSDSEGSQSP and PSSLSSSPLL. The bZIP domain maps to 291–354; the sequence is ALKKIRRKIK…KSLLQQLHSL (64 aa). The basic motif stretch occupies residues 293–322; it reads KKIRRKIKNKISAQESRRKKKEYVDALEKK. Residues 333–354 are leucine-zipper; that stretch reads LRRKVENLECTNKSLLQQLHSL. Residues 375–395 traverse the membrane as a helical; Signal-anchor for type II membrane protein segment; it reads TCLMVVVLCFSLFLGSFYPGL. Topologically, residues 396-519 are lumenal; that stretch reads SPCSSITKAD…QLDRTVNETS (124 aa). An S1P recognition motif is present at residues 423 to 426; that stretch reads RSLL. Asn485, Asn503, and Asn516 each carry an N-linked (GlcNAc...) asparagine glycan.

It belongs to the bZIP family. ATF subfamily. Binds DNA as a dimer. In terms of processing, upon ER stress, translocated to the Golgi apparatus, where it is processed by regulated intramembrane proteolysis (RIP) to release the cytosol-facing N-terminal transcription factor domain. The cleavage is performed sequentially by site-1 and site-2 proteases (S1P/mbtps1 and S2P/mbtps2).

The protein resides in the endoplasmic reticulum membrane. It is found in the nucleus. Transcription factor involved in unfolded protein response (UPR). In the absence of endoplasmic reticulum (ER) stress, inserted into ER membranes, with N-terminal DNA-binding and transcription activation domains oriented toward the cytosolic face of the membrane. In response to ER stress, transported to the Golgi, where it is cleaved in a site-specific manner by resident proteases S1P/mbtps1 and S2P/mbtps2. The released N-terminal cytosolic domain is translocated to the nucleus to effect transcription of specific target genes. Plays a critical role in chondrogenesis. May protect neuroblastoma cells from ER stress-induced death. In vitro activates transcription of target genes via direct binding to the CRE site. This Danio rerio (Zebrafish) protein is Cyclic AMP-responsive element-binding protein 3-like protein 2 (creb3l2).